Consider the following 215-residue polypeptide: 3-isopropylmalate dehydratase small subunit (215 aa).

The protein belongs to the LeuD family. LeuD type 1 subfamily. As to quaternary structure, heterodimer of LeuC and LeuD.

The catalysed reaction is (2R,3S)-3-isopropylmalate = (2S)-2-isopropylmalate. The protein operates within amino-acid biosynthesis; L-leucine biosynthesis; L-leucine from 3-methyl-2-oxobutanoate: step 2/4. Its function is as follows. Catalyzes the isomerization between 2-isopropylmalate and 3-isopropylmalate, via the formation of 2-isopropylmaleate. This chain is 3-isopropylmalate dehydratase small subunit, found in Polynucleobacter necessarius subsp. necessarius (strain STIR1).